The following is a 62-amino-acid chain: Short neurotoxin B (62 aa).

Residues 1–16 are compositionally biased toward polar residues; it reads RRCFNHPSSQPQTNKS. A disordered region spans residues 1–21; that stretch reads RRCFNHPSSQPQTNKSCPPGE. Cystine bridges form between Cys-3–Cys-24, Cys-17–Cys-41, Cys-43–Cys-54, and Cys-55–Cys-60.

Belongs to the three-finger toxin family. Short-chain subfamily. Type I alpha-neurotoxin sub-subfamily. As to expression, expressed by the venom gland.

The protein localises to the secreted. Its function is as follows. Binds to muscle nicotinic acetylcholine receptor (nAChR) and inhibit acetylcholine from binding to the receptor, thereby impairing neuromuscular transmission. The sequence is that of Short neurotoxin B from Laticauda crockeri (Crocker's sea snake).